Here is a 338-residue protein sequence, read N- to C-terminus: Anthranilate phosphoribosyltransferase (338 aa).

Residues Gly-78, 81–82, Thr-86, 88–91, 106–114, and Ser-118 each bind 5-phospho-alpha-D-ribose 1-diphosphate; these read GD, NIST, and KHGNRSVSS. Gly-78 lines the anthranilate pocket. Ser-90 is a Mg(2+) binding site. Residue Asn-109 coordinates anthranilate. Residue Arg-164 participates in anthranilate binding. 2 residues coordinate Mg(2+): Asp-223 and Glu-224.

It belongs to the anthranilate phosphoribosyltransferase family. Homodimer. Requires Mg(2+) as cofactor.

The catalysed reaction is N-(5-phospho-beta-D-ribosyl)anthranilate + diphosphate = 5-phospho-alpha-D-ribose 1-diphosphate + anthranilate. The protein operates within amino-acid biosynthesis; L-tryptophan biosynthesis; L-tryptophan from chorismate: step 2/5. Its function is as follows. Catalyzes the transfer of the phosphoribosyl group of 5-phosphorylribose-1-pyrophosphate (PRPP) to anthranilate to yield N-(5'-phosphoribosyl)-anthranilate (PRA). The protein is Anthranilate phosphoribosyltransferase of Bacillus subtilis (strain 168).